We begin with the raw amino-acid sequence, 205 residues long: QQIPPEVSSQITDALTQGLLDGNFLSLLNAINLEGLLNTILDQVTGLLNILVGPLLGSSNAEIKLQDARLLQLSLEFSPDSKGIDIWIPLELSVYLKLLILEPLTLYVRTDIRAQLQLESDEDGKYRLAFGHCTLLPRAIELQTGNPLSLTVNAVLGTIENTLGNFITEDLGAGLCPTLNSLVSNLNLQLVNNLINLILDRANVD.

C133 and C176 are oxidised to a cystine.

This sequence belongs to the BPI/LBP/Plunc superfamily. Plunc family. Monomer.

It localises to the secreted. Major protein in sweat, has surfactant properties. This is Latherin (LATH) from Equus quagga burchellii (Burchell's zebra).